The sequence spans 407 residues: Bifunctional enzyme IspD/IspF (407 aa).

The 2-C-methyl-D-erythritol 4-phosphate cytidylyltransferase stretch occupies residues 1-246 (MQPLAEATTI…RQDHVSFPDI (246 aa)). The segment at 247–407 (RTGNGYDVHS…TVIYPGEVPE (161 aa)) is 2-C-methyl-D-erythritol 2,4-cyclodiphosphate synthase. D253 and H255 together coordinate a divalent metal cation. Residues 253–255 (DVH) and 279–280 (HS) contribute to the 4-CDP-2-C-methyl-D-erythritol 2-phosphate site. An a divalent metal cation-binding site is contributed by H287. Residues 301-303 (DIG), 377-380 (TTNE), F384, and R387 contribute to the 4-CDP-2-C-methyl-D-erythritol 2-phosphate site.

This sequence in the N-terminal section; belongs to the IspD/TarI cytidylyltransferase family. IspD subfamily. In the C-terminal section; belongs to the IspF family. The cofactor is a divalent metal cation.

It catalyses the reaction 2-C-methyl-D-erythritol 4-phosphate + CTP + H(+) = 4-CDP-2-C-methyl-D-erythritol + diphosphate. The enzyme catalyses 4-CDP-2-C-methyl-D-erythritol 2-phosphate = 2-C-methyl-D-erythritol 2,4-cyclic diphosphate + CMP. It participates in isoprenoid biosynthesis; isopentenyl diphosphate biosynthesis via DXP pathway; isopentenyl diphosphate from 1-deoxy-D-xylulose 5-phosphate: step 2/6. Its pathway is isoprenoid biosynthesis; isopentenyl diphosphate biosynthesis via DXP pathway; isopentenyl diphosphate from 1-deoxy-D-xylulose 5-phosphate: step 4/6. Functionally, bifunctional enzyme that catalyzes the formation of 4-diphosphocytidyl-2-C-methyl-D-erythritol from CTP and 2-C-methyl-D-erythritol 4-phosphate (MEP) (IspD), and catalyzes the conversion of 4-diphosphocytidyl-2-C-methyl-D-erythritol 2-phosphate (CDP-ME2P) to 2-C-methyl-D-erythritol 2,4-cyclodiphosphate (ME-CPP) with a corresponding release of cytidine 5-monophosphate (CMP) (IspF). In Brucella anthropi (strain ATCC 49188 / DSM 6882 / CCUG 24695 / JCM 21032 / LMG 3331 / NBRC 15819 / NCTC 12168 / Alc 37) (Ochrobactrum anthropi), this protein is Bifunctional enzyme IspD/IspF.